Here is a 443-residue protein sequence, read N- to C-terminus: Putative F-box/FBD/LRR-repeat protein At5g22670 (443 aa).

One can recognise an F-box domain in the interval 10–56 (QDSISLLPDDLLCRILSNLPTKVAVRTSVLSKRWKRFSLSVPLLEFN). LRR repeat units follow at residues 139-165 (SLRL…HLID), 166-191 (NIYP…NVSR), 219-243 (YGDI…SLRD), 275-300 (NFLL…TMSG), and 325-353 (YAVF…VLEL). An FBD domain is found at 361–412 (LLILSSSIPKCLRSSLEHVEIHTPISGAEAEMKLVKYFLENSAVLKKFTLQL).

The polypeptide is Putative F-box/FBD/LRR-repeat protein At5g22670 (Arabidopsis thaliana (Mouse-ear cress)).